A 240-amino-acid polypeptide reads, in one-letter code: Urease accessory protein UreF (240 aa).

This sequence belongs to the UreF family. As to quaternary structure, ureD, UreF and UreG form a complex that acts as a GTP-hydrolysis-dependent molecular chaperone, activating the urease apoprotein by helping to assemble the nickel containing metallocenter of UreC. The UreE protein probably delivers the nickel.

The protein localises to the cytoplasm. Functionally, required for maturation of urease via the functional incorporation of the urease nickel metallocenter. The chain is Urease accessory protein UreF from Bradyrhizobium sp. (strain BTAi1 / ATCC BAA-1182).